The sequence spans 178 residues: Inorganic pyrophosphatase (178 aa).

The substrate site is built by Lys30, Arg44, and Tyr56. 3 residues coordinate Mg(2+): Asp66, Asp71, and Asp103. Residue Tyr140 participates in substrate binding.

Belongs to the PPase family. Homohexamer. The cofactor is Mg(2+).

The protein resides in the cytoplasm. The catalysed reaction is diphosphate + H2O = 2 phosphate + H(+). Its function is as follows. Catalyzes the hydrolysis of inorganic pyrophosphate (PPi) forming two phosphate ions. This chain is Inorganic pyrophosphatase, found in Pyrococcus abyssi (strain GE5 / Orsay).